The sequence spans 467 residues: Asparagine--tRNA ligase (467 aa).

It belongs to the class-II aminoacyl-tRNA synthetase family. As to quaternary structure, homodimer.

It localises to the cytoplasm. It carries out the reaction tRNA(Asn) + L-asparagine + ATP = L-asparaginyl-tRNA(Asn) + AMP + diphosphate + H(+). This chain is Asparagine--tRNA ligase, found in Phocaeicola vulgatus (strain ATCC 8482 / DSM 1447 / JCM 5826 / CCUG 4940 / NBRC 14291 / NCTC 11154) (Bacteroides vulgatus).